The primary structure comprises 315 residues: Methionyl-tRNA formyltransferase (315 aa).

A (6S)-5,6,7,8-tetrahydrofolate-binding site is contributed by 113 to 116; it reads SILP.

The protein belongs to the Fmt family.

It catalyses the reaction L-methionyl-tRNA(fMet) + (6R)-10-formyltetrahydrofolate = N-formyl-L-methionyl-tRNA(fMet) + (6S)-5,6,7,8-tetrahydrofolate + H(+). Its function is as follows. Attaches a formyl group to the free amino group of methionyl-tRNA(fMet). The formyl group appears to play a dual role in the initiator identity of N-formylmethionyl-tRNA by promoting its recognition by IF2 and preventing the misappropriation of this tRNA by the elongation apparatus. The sequence is that of Methionyl-tRNA formyltransferase from Vibrio vulnificus (strain YJ016).